Consider the following 251-residue polypeptide: Small ribosomal subunit protein uS2 (251 aa).

The protein belongs to the universal ribosomal protein uS2 family.

This is Small ribosomal subunit protein uS2 (rpsB) from Arthrospira platensis (Spirulina platensis).